The following is a 321-amino-acid chain: Eukaryotic translation initiation factor 3 subunit I (321 aa).

WD repeat units follow at residues 8–47 (GHER…RLGT), 50–89 (GHGG…TLSK), 140–179 (VDNS…KLIS), 182–221 (EHSK…HLKT), and 279–318 (GHFG…DDIE).

Belongs to the eIF-3 subunit I family. In terms of assembly, component of the eukaryotic translation initiation factor 3 (eIF-3) complex.

It is found in the cytoplasm. Its function is as follows. Component of the eukaryotic translation initiation factor 3 (eIF-3) complex, which is involved in protein synthesis of a specialized repertoire of mRNAs and, together with other initiation factors, stimulates binding of mRNA and methionyl-tRNAi to the 40S ribosome. The eIF-3 complex specifically targets and initiates translation of a subset of mRNAs involved in cell proliferation. This Nematostella vectensis (Starlet sea anemone) protein is Eukaryotic translation initiation factor 3 subunit I.